Here is a 258-residue protein sequence, read N- to C-terminus: Glucose 1-dehydrogenase 2 (258 aa).

11–35 contacts NADP(+); the sequence is IVTGSSKGIGKAIAERFGKEKMNVV. Ser-146 contacts substrate. Residue Tyr-159 is the Proton acceptor of the active site.

It belongs to the short-chain dehydrogenases/reductases (SDR) family. Homotetramer.

The enzyme catalyses D-glucose + NAD(+) = D-glucono-1,5-lactone + NADH + H(+). It catalyses the reaction D-glucose + NADP(+) = D-glucono-1,5-lactone + NADPH + H(+). The polypeptide is Glucose 1-dehydrogenase 2 (ycdF) (Bacillus subtilis (strain 168)).